Here is a 619-residue protein sequence, read N- to C-terminus: Zinc finger protein 131 (619 aa).

A BTB domain is found at 34-98; it reads TDITLIVDGH…TYTAKLMIQG (65 aa). The Nuclear localization signal 1 motif lies at 137-148; sequence TGKNEAKKRKIA. Residue Ser-231 is modified to Phosphoserine. C2H2-type zinc fingers lie at residues 261 to 283, 288 to 311, and 328 to 350; these read FHCE…MKSH, FKCE…NCYH, and HICQ…LRKH. Residues Lys-289 and Lys-295 each participate in a glycyl lysine isopeptide (Lys-Gly) (interchain with G-Cter in SUMO2) cross-link. The Nuclear localization signal 2 motif lies at 317–328; sequence VSKKQRTGKKIH. The C2H2-type 4; degenerate zinc-finger motif lies at 356 to 381; sequence FECSNCHERFARNSTLKCHLTACQTG. C2H2-type zinc fingers lie at residues 392–414 and 420–443; these read YECQ…LVIH and NHCT…SDAH. Composition is skewed to basic and acidic residues over residues 574–587 and 595–612; these read QEER…AAME and LETK…ENDR. A disordered region spans residues 574–619; the sequence is QEEREPNHADAAMEEHEDAEGLETKPSEYSQARKTENDRTSLPVLE. Residue Lys-598 forms a Glycyl lysine isopeptide (Lys-Gly) (interchain with G-Cter in SUMO) linkage.

It belongs to the krueppel C2H2-type zinc-finger protein family. In terms of processing, monosumoylated at Lys-598 by CBX4 and UHRF2. Sumoylation may potentiate ZNF131 inhibition of estrogen signaling. Sumoylation does not interfere with ubiquitination. Post-translationally, ubiquitinated. In terms of tissue distribution, ubiquitously expressed. Predominant expression is found in the developing central nervous system with strongest signals in the forebrain, midbrain, and hindbrain areas and in the neural tube.

It localises to the nucleus. May be involved in transcriptional regulation as a repressor of ESR1/ER-alpha signaling. Plays a role during development and organogenesis as well as in the function of the adult central nervous system. The sequence is that of Zinc finger protein 131 (Znf131) from Mus musculus (Mouse).